Here is a 363-residue protein sequence, read N- to C-terminus: 3-dehydroquinate synthase (363 aa).

NAD(+) contacts are provided by residues G109–D113, T133–T134, K146, and K155. Zn(2+) contacts are provided by E188, H251, and H267.

It belongs to the sugar phosphate cyclases superfamily. Dehydroquinate synthase family. It depends on NAD(+) as a cofactor. The cofactor is Co(2+). Zn(2+) is required as a cofactor.

The protein resides in the cytoplasm. The enzyme catalyses 7-phospho-2-dehydro-3-deoxy-D-arabino-heptonate = 3-dehydroquinate + phosphate. Its pathway is metabolic intermediate biosynthesis; chorismate biosynthesis; chorismate from D-erythrose 4-phosphate and phosphoenolpyruvate: step 2/7. Functionally, catalyzes the conversion of 3-deoxy-D-arabino-heptulosonate 7-phosphate (DAHP) to dehydroquinate (DHQ). The sequence is that of 3-dehydroquinate synthase from Streptomyces coelicolor (strain ATCC BAA-471 / A3(2) / M145).